A 302-amino-acid chain; its full sequence is Quinolinate synthase (302 aa).

Iminosuccinate-binding residues include His24 and Ser41. Cys86 serves as a coordination point for [4Fe-4S] cluster. Iminosuccinate contacts are provided by residues Tyr112–Asn114 and Ser129. Position 173 (Cys173) interacts with [4Fe-4S] cluster. Iminosuccinate-binding positions include His199–Glu201 and Thr216. Cys259 provides a ligand contact to [4Fe-4S] cluster.

This sequence belongs to the quinolinate synthase family. Type 2 subfamily. The cofactor is [4Fe-4S] cluster.

It localises to the cytoplasm. It carries out the reaction iminosuccinate + dihydroxyacetone phosphate = quinolinate + phosphate + 2 H2O + H(+). It functions in the pathway cofactor biosynthesis; NAD(+) biosynthesis; quinolinate from iminoaspartate: step 1/1. Catalyzes the condensation of iminoaspartate with dihydroxyacetone phosphate to form quinolinate. The chain is Quinolinate synthase from Thermococcus kodakarensis (strain ATCC BAA-918 / JCM 12380 / KOD1) (Pyrococcus kodakaraensis (strain KOD1)).